A 347-amino-acid polypeptide reads, in one-letter code: NADH-quinone oxidoreductase subunit H (347 aa).

Transmembrane regions (helical) follow at residues 13–33 (LLIL…VAYI), 82–102 (GVFL…WAVI), 115–135 (VGIL…IMGG), 161–181 (IGFV…SDIV), 198–218 (FLDW…ISAL), 248–268 (FLLF…LATI), 283–303 (FTWV…FFGI), and 321–341 (LGWK…AAFL).

The protein belongs to the complex I subunit 1 family. In terms of assembly, NDH-1 is composed of 14 different subunits. Subunits NuoA, H, J, K, L, M, N constitute the membrane sector of the complex.

It is found in the cell inner membrane. The enzyme catalyses a quinone + NADH + 5 H(+)(in) = a quinol + NAD(+) + 4 H(+)(out). NDH-1 shuttles electrons from NADH, via FMN and iron-sulfur (Fe-S) centers, to quinones in the respiratory chain. The immediate electron acceptor for the enzyme in this species is believed to be ubiquinone. Couples the redox reaction to proton translocation (for every two electrons transferred, four hydrogen ions are translocated across the cytoplasmic membrane), and thus conserves the redox energy in a proton gradient. This subunit may bind ubiquinone. The polypeptide is NADH-quinone oxidoreductase subunit H (Mesorhizobium japonicum (strain LMG 29417 / CECT 9101 / MAFF 303099) (Mesorhizobium loti (strain MAFF 303099))).